A 392-amino-acid chain; its full sequence is Quinolinate synthase (392 aa).

The segment at 1 to 23 is disordered; that stretch reads MVDLPTTTPPAQPTTGNDEVDAL. Positions 57 and 74 each coordinate iminosuccinate. C131 lines the [4Fe-4S] cluster pocket. Iminosuccinate contacts are provided by residues 163-165 and S184; that span reads YIN. C254 contacts [4Fe-4S] cluster. Residues 280-282 and T297 contribute to the iminosuccinate site; that span reads HPE. A [4Fe-4S] cluster-binding site is contributed by C344.

Belongs to the quinolinate synthase family. Type 3 subfamily. [4Fe-4S] cluster serves as cofactor.

It is found in the cytoplasm. It catalyses the reaction iminosuccinate + dihydroxyacetone phosphate = quinolinate + phosphate + 2 H2O + H(+). It functions in the pathway cofactor biosynthesis; NAD(+) biosynthesis; quinolinate from iminoaspartate: step 1/1. Functionally, catalyzes the condensation of iminoaspartate with dihydroxyacetone phosphate to form quinolinate. The chain is Quinolinate synthase from Rhodopirellula baltica (strain DSM 10527 / NCIMB 13988 / SH1).